The chain runs to 419 residues: Histidine--tRNA ligase (419 aa).

It belongs to the class-II aminoacyl-tRNA synthetase family. Homodimer.

It is found in the cytoplasm. The enzyme catalyses tRNA(His) + L-histidine + ATP = L-histidyl-tRNA(His) + AMP + diphosphate + H(+). The sequence is that of Histidine--tRNA ligase from Halothermothrix orenii (strain H 168 / OCM 544 / DSM 9562).